Consider the following 741-residue polypeptide: NAD(P)H-quinone oxidoreductase subunit 5, chloroplastic (741 aa).

16 consecutive transmembrane segments (helical) span residues 9–29 (WIIP…LLLF), 40–60 (WAFQ…NLSI), 89–109 (IDPL…MVLI), 125–145 (FAYM…SNLI), 147–167 (IYIF…FWFT), 185–205 (GDFG…SFEF), 219–239 (NEVN…GAIA), 258–278 (TPIS…FPVA), 284–304 (FIVI…TVFF), 327–347 (LGYM…FHLI), 354–374 (ALLF…VGYC), 396–416 (NSFL…CFWS), 425–445 (WLYS…TAFY), 549–569 (LFPI…GIPF), 605–625 (VFSV…YKPV), and 721–741 (YLFF…FLNL).

This sequence belongs to the complex I subunit 5 family. In terms of assembly, NDH is composed of at least 16 different subunits, 5 of which are encoded in the nucleus.

Its subcellular location is the plastid. It localises to the chloroplast thylakoid membrane. It catalyses the reaction a plastoquinone + NADH + (n+1) H(+)(in) = a plastoquinol + NAD(+) + n H(+)(out). The catalysed reaction is a plastoquinone + NADPH + (n+1) H(+)(in) = a plastoquinol + NADP(+) + n H(+)(out). Functionally, NDH shuttles electrons from NAD(P)H:plastoquinone, via FMN and iron-sulfur (Fe-S) centers, to quinones in the photosynthetic chain and possibly in a chloroplast respiratory chain. The immediate electron acceptor for the enzyme in this species is believed to be plastoquinone. Couples the redox reaction to proton translocation, and thus conserves the redox energy in a proton gradient. This Guizotia abyssinica (Niger) protein is NAD(P)H-quinone oxidoreductase subunit 5, chloroplastic (ndhF).